Here is a 227-residue protein sequence, read N- to C-terminus: MTARALDELVEPGWAKALEPVADQVTAMGQFLRAELAAGRKYLPAGPNVLRAFTFPFDQVRILIVGQDPYPTPGHAVGLSFSVAPDVRPLPRSLSNIFQEYADDLGYPMPACGDLTPWAQRGVMLLNRVLTVRPSNPASHRGKGWEAVTECAIRALAARSQPMVAILWGRDASTLKSMLAGGDCASIESPHPSPLSASRGFFGSRPFSRANELLTGRGADPIDWRLP.

Aspartate 68 serves as the catalytic Proton acceptor.

It belongs to the uracil-DNA glycosylase (UDG) superfamily. UNG family.

It localises to the cytoplasm. It catalyses the reaction Hydrolyzes single-stranded DNA or mismatched double-stranded DNA and polynucleotides, releasing free uracil.. Its function is as follows. Excises uracil residues from the DNA which can arise as a result of misincorporation of dUMP residues by DNA polymerase or due to deamination of cytosine. This Mycobacterium ulcerans (strain Agy99) protein is Uracil-DNA glycosylase.